The chain runs to 241 residues: Phycocyanobilin:ferredoxin oxidoreductase (241 aa).

The protein belongs to the HY2 family.

The catalysed reaction is (2R,3Z)-phycocyanobilin + 4 oxidized [2Fe-2S]-[ferredoxin] = biliverdin IXalpha + 4 reduced [2Fe-2S]-[ferredoxin] + 4 H(+). Its function is as follows. Catalyzes the four-electron reduction of biliverdin IX-alpha (2-electron reduction at both the A and D rings); the reaction proceeds via an isolatable 2-electron intermediate, 181,182-dihydrobiliverdin. This is Phycocyanobilin:ferredoxin oxidoreductase from Prochlorococcus marinus (strain MIT 9515).